Reading from the N-terminus, the 334-residue chain is Heat-inducible transcription repressor HrcA (334 aa).

It belongs to the HrcA family.

In terms of biological role, negative regulator of class I heat shock genes (grpE-dnaK-dnaJ and groELS operons). Prevents heat-shock induction of these operons. The sequence is that of Heat-inducible transcription repressor HrcA from Bordetella bronchiseptica (strain ATCC BAA-588 / NCTC 13252 / RB50) (Alcaligenes bronchisepticus).